A 98-amino-acid polypeptide reads, in one-letter code: Nucleoid-associated protein pc0477 (98 aa).

This sequence belongs to the YbaB/EbfC family. As to quaternary structure, homodimer.

The protein resides in the cytoplasm. It is found in the nucleoid. Functionally, binds to DNA and alters its conformation. May be involved in regulation of gene expression, nucleoid organization and DNA protection. This chain is Nucleoid-associated protein pc0477, found in Protochlamydia amoebophila (strain UWE25).